A 472-amino-acid polypeptide reads, in one-letter code: Pentatricopeptide repeat-containing protein At5g46100 (472 aa).

PPR repeat units lie at residues 50-84 (DQSS…NCVV), 85-119 (SEDI…DCDP), 120-154 (SQKA…GLPP), 155-190 (TVAS…GCDP), 191-225 (DSYT…DCAP), 226-260 (TVVT…GIEP), 261-295 (NVFT…GCRP), 296-330 (NMVT…GLKP), 331-365 (DAGL…GITP), 373-406 (HVKT…GISV), and 407-441 (EVET…GCIP).

Belongs to the PPR family. P subfamily.

The chain is Pentatricopeptide repeat-containing protein At5g46100 from Arabidopsis thaliana (Mouse-ear cress).